Reading from the N-terminus, the 171-residue chain is Phosphopantetheine adenylyltransferase (171 aa).

T9 is a binding site for substrate. Residues 9–10 (TF) and H17 contribute to the ATP site. Positions 41, 78, and 92 each coordinate substrate. ATP-binding positions include 93-95 (GLR), E103, and 128-134 (HQAIASK).

It belongs to the bacterial CoaD family. In terms of assembly, homohexamer. Mg(2+) serves as cofactor.

The protein resides in the cytoplasm. The enzyme catalyses (R)-4'-phosphopantetheine + ATP + H(+) = 3'-dephospho-CoA + diphosphate. It participates in cofactor biosynthesis; coenzyme A biosynthesis; CoA from (R)-pantothenate: step 4/5. Functionally, reversibly transfers an adenylyl group from ATP to 4'-phosphopantetheine, yielding dephospho-CoA (dPCoA) and pyrophosphate. The polypeptide is Phosphopantetheine adenylyltransferase (Dinoroseobacter shibae (strain DSM 16493 / NCIMB 14021 / DFL 12)).